Consider the following 338-residue polypeptide: Glyceraldehyde-3-phosphate dehydrogenase (338 aa).

NAD(+)-binding positions include 13 to 14 (RI), D35, and R80. Residues 151-153 (SCT), T182, 211-212 (TG), and R234 contribute to the D-glyceraldehyde 3-phosphate site. C152 acts as the Nucleophile in catalysis. An NAD(+)-binding site is contributed by N317.

Belongs to the glyceraldehyde-3-phosphate dehydrogenase family. Homotetramer.

The protein localises to the cytoplasm. The enzyme catalyses D-glyceraldehyde 3-phosphate + phosphate + NAD(+) = (2R)-3-phospho-glyceroyl phosphate + NADH + H(+). It functions in the pathway carbohydrate degradation; glycolysis; pyruvate from D-glyceraldehyde 3-phosphate: step 1/5. The protein is Glyceraldehyde-3-phosphate dehydrogenase (gpdA) of Aspergillus oryzae (strain ATCC 42149 / RIB 40) (Yellow koji mold).